A 138-amino-acid chain; its full sequence is Translation initiation factor IF-1, chloroplastic (138 aa).

Residues 1–53 (MFTSLHTPILHPRYCHHPTPSCTQFSPLALPPFHRTLSFLAPPPLLPAAPALS) constitute a chloroplast transit peptide. The S1-like domain occupies 58 to 133 (AKPDKSGEQK…SKGRIVYRLR (76 aa)).

Belongs to the IF-1 family. In terms of assembly, component of the 30S ribosomal translation pre-initiation complex which assembles on the 30S ribosome in the order IF-2 and IF-3, IF-1 and N-formylmethionyl-tRNA(fMet); mRNA recruitment can occur at any time during PIC assembly.

It is found in the plastid. The protein localises to the chloroplast. Its function is as follows. One of the essential components for the initiation of protein synthesis. Stabilizes the binding of IF-2 and IF-3 on the 30S subunit to which N-formylmethionyl-tRNA(fMet) subsequently binds. Helps modulate mRNA selection, yielding the 30S pre-initiation complex (PIC). Upon addition of the 50S ribosomal subunit IF-1, IF-2 and IF-3 are released leaving the mature 70S translation initiation complex. This chain is Translation initiation factor IF-1, chloroplastic (infA), found in Glycine max (Soybean).